The following is a 1175-amino-acid chain: 1-phosphatidylinositol 4,5-bisphosphate phosphodiesterase beta-4 (1175 aa).

A2 carries the N-acetylalanine modification. The 151-residue stretch at Q313–K463 folds into the PI-PLC X-box domain. Active-site residues include H328 and H375. Positions A487–P512 are disordered. Residues L493–E508 show a composition bias toward acidic residues. Residues L565–R681 form the PI-PLC Y-box domain. In terms of domain architecture, C2 spans D684–L809. Disordered regions lie at residues S860–G904 and K1082–L1110. Polar residues-rich tracts occupy residues V885–A900 and M1085–D1094. T886 carries the phosphothreonine modification. Basic and acidic residues predominate over residues K1095 to E1109.

It depends on Ca(2+) as a cofactor. Preferentially expressed in the retina.

Its subcellular location is the cell membrane. The enzyme catalyses a 1,2-diacyl-sn-glycero-3-phospho-(1D-myo-inositol-4,5-bisphosphate) + H2O = 1D-myo-inositol 1,4,5-trisphosphate + a 1,2-diacyl-sn-glycerol + H(+). It carries out the reaction a 1,2-diacyl-sn-glycero-3-phospho-(1D-myo-inositol) + H2O = 1D-myo-inositol 1-phosphate + a 1,2-diacyl-sn-glycerol + H(+). Functionally, activated phosphatidylinositol-specific phospholipase C enzymes catalyze the production of the second messenger molecules diacylglycerol (DAG) and inositol 1,4,5-trisphosphate (IP3) involved in G-protein coupled receptor signaling pathways. PLCB4 is a direct effector of the endothelin receptor signaling pathway that plays an essential role in lower jaw and middle ear structures development. This is 1-phosphatidylinositol 4,5-bisphosphate phosphodiesterase beta-4 from Rattus norvegicus (Rat).